Here is a 201-residue protein sequence, read N- to C-terminus: uncharacterized protein (201 aa).

2 coiled-coil regions span residues tyrosine 3–lysine 43 and threonine 76–lysine 120.

This is an uncharacterized protein from Archaeoglobus fulgidus (strain ATCC 49558 / DSM 4304 / JCM 9628 / NBRC 100126 / VC-16).